A 234-amino-acid polypeptide reads, in one-letter code: R-spondin-4 (234 aa).

Residues 1-19 (MRAPLCLLLLVAHAVDMLA) form the signal peptide. Residue N34 is glycosylated (N-linked (GlcNAc...) asparagine). Disulfide bonds link C35-C41, C38-C47, C50-C69, C73-C88, C91-C98, C95-C104, C107-C118, C122-C135, C139-C181, C150-C157, and C190-C196. Residues 85-128 (VNRCKKCGATCESCFSQDFCIRCKRQFYLYKGKCLPTCPPGTLA) form an FU repeat. Residues 138 to 197 (ECELGPWGGWSPCTHNGKTCGSAWGLESRVREAGRAGHEEAATCQVLSESRKCPIQRPCP) form the TSP type-1 domain. Positions 190–234 (CPIQRPCPGERSPGQKKGRKDRRPRKDRKLDRRLDVRPRQPGLQP) are disordered. A compositionally biased stretch (basic residues) spans 203 to 216 (GQKKGRKDRRPRKD). The span at 217–227 (RKLDRRLDVRP) shows a compositional bias: basic and acidic residues.

Belongs to the R-spondin family. As to quaternary structure, binds heparin. Interacts with LGR4, LGR5 and LGR6. Tyr-112 may be phosphorylated; however as this position is probably extracellular, the vivo relevance is not proven.

It is found in the secreted. Functionally, activator of the canonical Wnt signaling pathway by acting as a ligand for LGR4-6 receptors. Upon binding to LGR4-6 (LGR4, LGR5 or LGR6), LGR4-6 associate with phosphorylated LRP6 and frizzled receptors that are activated by extracellular Wnt receptors, triggering the canonical Wnt signaling pathway to increase expression of target genes. Also regulates the canonical Wnt/beta-catenin-dependent pathway and non-canonical Wnt signaling by acting as an inhibitor of ZNRF3, an important regulator of the Wnt signaling pathway. The chain is R-spondin-4 (RSPO4) from Homo sapiens (Human).